The chain runs to 938 residues: Scm-like with four MBT domains protein 2 (938 aa).

Positions 1 to 32 (MERYLPVSKKRNSSSSLEKITGSANGNGTLYS) are disordered. Positions 13–30 (SSSSLEKITGSANGNGTL) are enriched in polar residues. MBT repeat units lie at residues 43 to 143 (FSWG…LRPP), 151 to 255 (SDWT…MDPP), 265 to 371 (FEWK…LAPP), and 379 to 475 (FNWV…LTTP). The disordered stretch occupies residues 742 to 836 (PEGIPESLPE…TVPTTASSNN (95 aa)). Basic and acidic residues-rich tracts occupy residues 765-777 (TEQEKRETLDTAR) and 809-822 (RNSEALKRPPVERA). Residues 868 to 931 (WSVTDVVRFI…CHQIERVKVA (64 aa)) form the SAM domain.

Interacts with YY1. Interacts with methylated histones H3K9me2 and H4K20me2. As to expression, expressed in testis and, at much lower levels, in ovary.

Its subcellular location is the nucleus. Transcriptional repressor of HOXB13 gene. This chain is Scm-like with four MBT domains protein 2 (Sfmbt2), found in Mus musculus (Mouse).